Consider the following 381-residue polypeptide: MEMYFKRMKDEWTGLVEQADPLIRAKAAEIALAHAHYLSIEFYRIVRIDPHAEEFLSNEQVERQLKSAMERWIINVLSAQVDDVERLIQIQHTVAEVHARIGIPVEIVEMGFRVLKKILYPVIFSSDYSAAEKLQVYHFSINSIDIAMEVMTRAFTFSDSSASKEDENYRIFSLLENGEEEKERQIASILSWEIDIIYKVLLDSDLGSSLPLSQADFGLWFNHKGRHYFSGIAEVGHISRLIQDFDGIFNQTMRNTRILNNRSLRVKFLLQIRNTVSQIITLLRELFEEVSRHEVGMDVLTKLLNRRFLPTIFKREIAHANRTGTPLSVLIIDVDKFKEINDTWGHNTGDEILRKVSFLSQKRLVKSKILGAGSSRKLAVS.

A heme-binding site is contributed by histidine 98. In terms of domain architecture, GGDEF spans 325–381 (TPLSVLIIDVDKFKEINDTWGHNTGDEILRKVSFLSQKRLVKSKILGAGSSRKLAVS). Aspartate 333 is a binding site for Mg(2+). The substrate site is built by asparagine 341 and aspartate 350.

Heme is required as a cofactor. It depends on Mg(2+) as a cofactor.

The enzyme catalyses 2 GTP = 3',3'-c-di-GMP + 2 diphosphate. Its pathway is purine metabolism; 3',5'-cyclic di-GMP biosynthesis. Functionally, globin-coupled heme-based oxygen sensor protein displaying diguanylate cyclase (DGC) activity in response to oxygen availability. Thus, catalyzes the synthesis of cyclic diguanylate (c-di-GMP) via the condensation of 2 GTP molecules. Cyclic-di-GMP is a second messenger which controls cell surface-associated traits in bacteria. This chain is Diguanylate cyclase DosC (dosC), found in Shigella flexneri serotype 5b (strain 8401).